A 1152-amino-acid chain; its full sequence is P3N-PIPO polyprotein (1152 aa).

The Peptidase S30 domain maps to 292 to 437 (VMNQQTLMAF…HSITHRMVQY (146 aa)). Residues His345, Asp354, and Ser388 each act as for P1 proteinase activity in the active site. The Involved in interaction with stylet and aphid transmission motif lies at 489–492 (KITC). Residues 747 to 749 (PTK) carry the Involved in virions binding and aphid transmission motif. The Peptidase C6 domain maps to 773 to 895 (MFVTKDGYCY…ESEMQHYRVG (123 aa)). Active-site for helper component proteinase activity residues include Cys781 and His854.

Belongs to the potyviridae P3N-PIPO polyprotein family. Interacts (via PIPO domain) with host PCaP1 protein; this interaction may help to anchor the movement complex to the plasma membrane from which the complex could move to the plasmodesmata. In terms of processing, potyviral RNA is expressed as two polyproteins which undergo post-translational proteolytic processing. Genome polyprotein is processed by NIa-pro, P1 and HC-pro proteinases resulting in the production of at least ten individual proteins. P3N-PIPO is cleaved by P1 and HC-pro proteinases resulting in the production of three individual proteins. The P1 proteinase and the HC-pro cleave only their respective C-termini autocatalytically.

Its subcellular location is the host cell junction. It is found in the host plasmodesma. The enzyme catalyses Hydrolyzes a Gly-|-Gly bond at its own C-terminus, commonly in the sequence -Tyr-Xaa-Val-Gly-|-Gly, in the processing of the potyviral polyprotein.. Functionally, required for aphid transmission and also has proteolytic activity. Only cleaves a Gly-Gly dipeptide at its own C-terminus. Interacts with virions and aphid stylets. Acts as a suppressor of RNA-mediated gene silencing, also known as post-transcriptional gene silencing (PTGS), a mechanism of plant viral defense that limits the accumulation of viral RNAs. May have RNA-binding activity. Its function is as follows. Allows efficient cell to cell propagation, by bypassing the host cell wall barrier. Transports viral genome to neighboring plant cells directly through plasmosdesmata, without any budding. This chain is P3N-PIPO polyprotein, found in Lettuce mosaic virus (strain 0 / isolate French) (LMV).